Reading from the N-terminus, the 338-residue chain is MEKQTVAVLGPGSWGTALSQVLNDNGHEVRIWGNLPEQINEINTHHTNKHYFKDVVLDENIIAYTDLAETLKDVDAILFVVPTKVTRLVAQQVAQTLDHKVIIMHASKGLEPDSHKRLSTILEEEIPEHLRSDIVVVSGPSHAEETIVRDLTLITAASKDLQTAQYVQKLFSNHYFRLYTNTDVIGVETAGALKNIIAVGAGALHGLGFGDNAKAAIIARGLAEITRLGVALGASPLTYSGLSGVGDLIVTGTSIHSRNWRAGDALGRGESLADIEANMGMVIEGISTTRAAYELAQELGVYMPITQAIYQVIYHGTNIKDAIYDIMNNEFKAENEWS.

Residues S13, W14, and K108 each contribute to the NADPH site. The sn-glycerol 3-phosphate site is built by K108, G139, and S141. A143 is a binding site for NADPH. Residues K194, D247, S257, R258, and N259 each coordinate sn-glycerol 3-phosphate. K194 (proton acceptor) is an active-site residue. R258 provides a ligand contact to NADPH. Residues V282 and E284 each contribute to the NADPH site.

It belongs to the NAD-dependent glycerol-3-phosphate dehydrogenase family.

The protein resides in the cytoplasm. It carries out the reaction sn-glycerol 3-phosphate + NAD(+) = dihydroxyacetone phosphate + NADH + H(+). The catalysed reaction is sn-glycerol 3-phosphate + NADP(+) = dihydroxyacetone phosphate + NADPH + H(+). It functions in the pathway membrane lipid metabolism; glycerophospholipid metabolism. In terms of biological role, catalyzes the reduction of the glycolytic intermediate dihydroxyacetone phosphate (DHAP) to sn-glycerol 3-phosphate (G3P), the key precursor for phospholipid synthesis. The chain is Glycerol-3-phosphate dehydrogenase [NAD(P)+] from Streptococcus pneumoniae (strain Taiwan19F-14).